Here is a 144-residue protein sequence, read N- to C-terminus: Large ribosomal subunit protein uL16 (144 aa).

The span at 1–17 (MLQPKKTKFRRQQKGRA) shows a compositional bias: basic residues. Residues 1 to 22 (MLQPKKTKFRRQQKGRAKGNAQ) form a disordered region.

This sequence belongs to the universal ribosomal protein uL16 family. As to quaternary structure, part of the 50S ribosomal subunit.

In terms of biological role, binds 23S rRNA and is also seen to make contacts with the A and possibly P site tRNAs. This chain is Large ribosomal subunit protein uL16, found in Bacteroides thetaiotaomicron (strain ATCC 29148 / DSM 2079 / JCM 5827 / CCUG 10774 / NCTC 10582 / VPI-5482 / E50).